We begin with the raw amino-acid sequence, 191 residues long: dCTP deaminase, dUMP-forming (191 aa).

Residues 101–106 (KSSLGR), D119, 127–129 (TLE), Q148, Y162, and Q174 each bind dCTP. E129 acts as the Proton donor/acceptor in catalysis. The disordered stretch occupies residues 169–191 (SRYQGQRGPTASRSFQNFHRTQV). The span at 171-191 (YQGQRGPTASRSFQNFHRTQV) shows a compositional bias: polar residues.

The protein belongs to the dCTP deaminase family. As to quaternary structure, homotrimer.

The catalysed reaction is dCTP + 2 H2O = dUMP + NH4(+) + diphosphate. It participates in pyrimidine metabolism; dUMP biosynthesis; dUMP from dCTP: step 1/1. Bifunctional enzyme that catalyzes both the deamination of dCTP to dUTP and the hydrolysis of dUTP to dUMP without releasing the toxic dUTP intermediate. This is dCTP deaminase, dUMP-forming from Streptomyces griseus subsp. griseus (strain JCM 4626 / CBS 651.72 / NBRC 13350 / KCC S-0626 / ISP 5235).